A 367-amino-acid polypeptide reads, in one-letter code: Probable butyrate kinase (367 aa).

The protein belongs to the acetokinase family.

It is found in the cytoplasm. The enzyme catalyses butanoate + ATP = butanoyl phosphate + ADP. This chain is Probable butyrate kinase, found in Bacillus cereus (strain B4264).